The primary structure comprises 673 residues: DNA ligase (673 aa).

Residues 36–40 (DAEYD), 85–86 (SL), and glutamate 116 each bind NAD(+). Lysine 118 serves as the catalytic N6-AMP-lysine intermediate. Positions 139, 176, 291, and 315 each coordinate NAD(+). Cysteine 409, cysteine 412, cysteine 427, and cysteine 433 together coordinate Zn(2+). Residues 592–673 (RGEQPLAGRT…LQALLQEHGR (82 aa)) enclose the BRCT domain.

This sequence belongs to the NAD-dependent DNA ligase family. LigA subfamily. Requires Mg(2+) as cofactor. Mn(2+) is required as a cofactor.

It carries out the reaction NAD(+) + (deoxyribonucleotide)n-3'-hydroxyl + 5'-phospho-(deoxyribonucleotide)m = (deoxyribonucleotide)n+m + AMP + beta-nicotinamide D-nucleotide.. Its function is as follows. DNA ligase that catalyzes the formation of phosphodiester linkages between 5'-phosphoryl and 3'-hydroxyl groups in double-stranded DNA using NAD as a coenzyme and as the energy source for the reaction. It is essential for DNA replication and repair of damaged DNA. The polypeptide is DNA ligase (Alkalilimnicola ehrlichii (strain ATCC BAA-1101 / DSM 17681 / MLHE-1)).